The chain runs to 294 residues: MRPSLDSYAHLAGGKVRDLYTIDDEHLLLVASDRISAYDHVLSTPIPDKGRVLTAMSVFFFGVLGGNNHLAGEPDDSRIPEEVLGRALVVRKLDMVPVECVARGYLTGSGLLDYNETGAVCGVALPEGLVEASQLPDPIFTPASKAELGEHDENISFEAVVEKVGQDLAVKLRDDTLDIYGRASNFAADRGIILADTKLEFGLDPQGNLVLADEVLTPDSSRYWPADGYEAGKVQPSFDKQFVRNWLTGPESGWDRASDTPPPPLPAEIVEATRERYIEAYERISGLSFADWVG.

Belongs to the SAICAR synthetase family.

It catalyses the reaction 5-amino-1-(5-phospho-D-ribosyl)imidazole-4-carboxylate + L-aspartate + ATP = (2S)-2-[5-amino-1-(5-phospho-beta-D-ribosyl)imidazole-4-carboxamido]succinate + ADP + phosphate + 2 H(+). Its pathway is purine metabolism; IMP biosynthesis via de novo pathway; 5-amino-1-(5-phospho-D-ribosyl)imidazole-4-carboxamide from 5-amino-1-(5-phospho-D-ribosyl)imidazole-4-carboxylate: step 1/2. This chain is Phosphoribosylaminoimidazole-succinocarboxamide synthase, found in Rhodococcus jostii (strain RHA1).